Reading from the N-terminus, the 430-residue chain is Histidine--tRNA ligase, chloroplastic (430 aa).

The protein belongs to the class-II aminoacyl-tRNA synthetase family.

Its subcellular location is the plastid. The protein localises to the chloroplast. It catalyses the reaction tRNA(His) + L-histidine + ATP = L-histidyl-tRNA(His) + AMP + diphosphate + H(+). This is Histidine--tRNA ligase, chloroplastic (hisS) from Porphyra purpurea (Red seaweed).